The following is a 130-amino-acid chain: Ribonuclease P protein component 2 (130 aa).

The protein belongs to the eukaryotic/archaeal RNase P protein component 2 family. Consists of a catalytic RNA component and at least 4-5 protein subunits.

It is found in the cytoplasm. It carries out the reaction Endonucleolytic cleavage of RNA, removing 5'-extranucleotides from tRNA precursor.. Its function is as follows. Part of ribonuclease P, a protein complex that generates mature tRNA molecules by cleaving their 5'-ends. This Methanococcus maripaludis (strain C6 / ATCC BAA-1332) protein is Ribonuclease P protein component 2.